The following is a 551-amino-acid chain: BAG family molecular chaperone regulator 8, chloroplastic (551 aa).

Positions 1-19 (MASHHHHNHNHVCSRHQNH) are enriched in basic residues. The tract at residues 1 to 46 (MASHHHHNHNHVCSRHQNHHNNTPQFATSPNCCNKSNHPSPPPAED) is disordered. A chloroplast-targeting transit peptide spans 1 to 52 (MASHHHHNHNHVCSRHQNHHNNTPQFATSPNCCNKSNHPSPPPAEDNLLHLV). The segment covering 20 to 38 (HNNTPQFATSPNCCNKSNH) has biased composition (polar residues). Residues 131–160 (RDSAARVIQTHFRSYLVHRSISFRQLKELA) form the IQ domain. The BAG domain occupies 147–228 (VHRSISFRQL…RFVQYVDDCV (82 aa)). The interval 246–281 (GKKPQGFGTSSEDEDNNADMSDDSEEVPVSSIDKRK) is disordered. The segment covering 256–271 (SEDEDNNADMSDDSEE) has biased composition (acidic residues). Ser-332 carries the phosphoserine modification. 2 disordered regions span residues 414–433 (DEGK…KGSG) and 450–551 (NVYK…KMEP). Residues 479–499 (GEEKGNVNEVEEIKYVPKENE) are compositionally biased toward basic and acidic residues. Residues 500 to 513 (SFEEEEEKETDSEN) are compositionally biased toward acidic residues. Residues 522-534 (EGDKRVTKKEVQH) are compositionally biased toward basic and acidic residues.

Binds to the ATPase domain of HSP70/HSC70 chaperones.

It localises to the plastid. The protein localises to the chloroplast. Its function is as follows. Co-chaperone that regulates diverse cellular pathways, such as programmed cell death and stress responses. The polypeptide is BAG family molecular chaperone regulator 8, chloroplastic (BAG1) (Arabidopsis thaliana (Mouse-ear cress)).